Here is a 298-residue protein sequence, read N- to C-terminus: Porphobilinogen deaminase (298 aa).

An S-(dipyrrolylmethanemethyl)cysteine modification is found at Cys-242.

Belongs to the HMBS family. Monomer. Dipyrromethane is required as a cofactor.

The catalysed reaction is 4 porphobilinogen + H2O = hydroxymethylbilane + 4 NH4(+). It participates in porphyrin-containing compound metabolism; protoporphyrin-IX biosynthesis; coproporphyrinogen-III from 5-aminolevulinate: step 2/4. In terms of biological role, tetrapolymerization of the monopyrrole PBG into the hydroxymethylbilane pre-uroporphyrinogen in several discrete steps. The chain is Porphobilinogen deaminase from Fusobacterium nucleatum subsp. nucleatum (strain ATCC 25586 / DSM 15643 / BCRC 10681 / CIP 101130 / JCM 8532 / KCTC 2640 / LMG 13131 / VPI 4355).